Here is a 347-residue protein sequence, read N- to C-terminus: Probable G-protein coupled receptor 148 (347 aa).

Residues 1-51 (MGDELAPCPVGTTAWPALIQLISKTPCMPQAASNTSLGLGDLRVPSSMLYW) lie on the Extracellular side of the membrane. N-linked (GlcNAc...) asparagine glycosylation occurs at Asn-34. The helical transmembrane segment at 52-72 (LFLPSSLLAAATLAVSPLLLV) threads the bilayer. The Cytoplasmic portion of the chain corresponds to 73 to 85 (TILRNQRLRQEPH). A helical membrane pass occupies residues 86–106 (YLLPANILLSDLAYILLHMLI). Residues 107–130 (SSSSLGGWELGRMACGILTDAVFA) are Extracellular-facing. A helical membrane pass occupies residues 131–151 (ACTSTILSFTAIVLHTYLAVI). The Cytoplasmic portion of the chain corresponds to 152–165 (HPLRYLSFMSHGAA). A helical membrane pass occupies residues 166–186 (WKAVALIWLVACCFPTFLIWL). The Extracellular segment spans residues 187-214 (SKWQDAQLEEQGASYILPPSMGTQPGCG). Residues 215–235 (LLVIVTYTSILCVLFLCTALI) form a helical membrane-spanning segment. Residues 236 to 261 (ANCFWRIYAEAKTSGIWGQGYSRARG) are Cytoplasmic-facing. A helical transmembrane segment spans residues 262–282 (TLLIHSVLITLYVSTGVVFSL). The Extracellular segment spans residues 283 to 299 (DMVLTRYHHIDSGTHTW). The helical transmembrane segment at 300-322 (LLAANSEVLMMLPRAMLTYLYLL) threads the bilayer. Residues 323–347 (RYRQLLGMVRGHLPSRRHQAIFTIS) lie on the Cytoplasmic side of the membrane.

This sequence belongs to the G-protein coupled receptor 1 family. As to expression, expression restricted to nervous system and testis. Is also detected in several tumors types, most notably prostate cancer.

The protein localises to the cell membrane. In terms of biological role, orphan receptor. This is Probable G-protein coupled receptor 148 (GPR148) from Homo sapiens (Human).